A 961-amino-acid polypeptide reads, in one-letter code: DNA replication licensing factor MCM2 (961 aa).

Over residues Met1–Phe17 the composition is skewed to polar residues. Disordered stretches follow at residues Met1–Asn81 and Ala120–Glu220. Residues Ser39–Phe78 show a composition bias toward acidic residues. Composition is skewed to basic and acidic residues over residues Ala120–Gln146 and Pro166–Asp176. Over residues Gln205–Glu220 the composition is skewed to acidic residues. The segment at Cys380–Cys406 adopts a C4-type zinc-finger fold. The MCM domain occupies Ile524–Val730. Residue Gly574–Ser581 coordinates ATP. The short motif at Ser706–Asp709 is the Arginine finger element.

Belongs to the MCM family. Component of the minichromosome maintenance (MCM) complex, a heterotetramer composed of MCM2, MCM3, MCM4, MCM5, MCM6 and MCM7. Interacts with CSN5. Widely expressed, with higher expression in developing tissues.

The protein localises to the nucleus. The enzyme catalyses ATP + H2O = ADP + phosphate + H(+). In terms of biological role, probable component of the MCM2-7 complex (MCM complex) that may function as a DNA helicase and which is essential to undergo a single round of replication initiation and elongation per cell cycle in eukaryotic cells. Can complement the fission yeast mcm2 mutant. In Oryza sativa subsp. japonica (Rice), this protein is DNA replication licensing factor MCM2.